The sequence spans 388 residues: Pentatricopeptide repeat-containing protein 2, mitochondrial (388 aa).

A PPR repeat occupies threonine 166–lysine 200. A Phosphoserine modification is found at serine 382.

Belongs to the PTCD2 family.

It localises to the mitochondrion. Functionally, involved in mitochondrial RNA maturation and mitochondrial respiratory chain function. The sequence is that of Pentatricopeptide repeat-containing protein 2, mitochondrial (PTCD2) from Homo sapiens (Human).